The following is a 153-amino-acid chain: Pheromone-binding protein Gp-9 (153 aa).

An N-terminal signal peptide occupies residues 1 to 19; sequence MKTFVLHIFIFALVAFASA. 3 cysteine pairs are disulfide-bonded: C37/C77, C73/C129, and C118/C138.

This sequence belongs to the PBP/GOBP family. Homodimer.

It is found in the secreted. Functionally, colony queen number, a major feature of social organization, is associated with worker genotype for Gp-9. Colonies are headed by either a single reproductive queen (monogyne form) or multiple queens (polygyne form). Differences in worker Gp-9 genotypes between social forms may cause differences in workers' abilities to recognize queens and regulate their numbers. This is Pheromone-binding protein Gp-9 from Solenopsis interrupta (Fire ant).